The primary structure comprises 127 residues: Translation initiation factor 5A (127 aa).

A Hypusine modification is found at lysine 36.

Belongs to the eIF-5A family.

It localises to the cytoplasm. Functionally, functions by promoting the formation of the first peptide bond. This chain is Translation initiation factor 5A (eif5a), found in Halobacterium salinarum (strain ATCC 700922 / JCM 11081 / NRC-1) (Halobacterium halobium).